The chain runs to 728 residues: Fatty acid oxidation complex subunit alpha (728 aa).

Residues 1-189 (MLYQSETIQV…KNGLIDAVVP (189 aa)) form an enoyl-CoA hydratase/isomerase region. A substrate-binding site is contributed by Asp-296. The interval 311–728 (TIPEYAAVLG…TIAVSTGKTA (418 aa)) is 3-hydroxyacyl-CoA dehydrogenase. NAD(+) is bound by residues Met-324, Asp-343, 400–402 (VVE), Lys-407, and Ser-429. The active-site For 3-hydroxyacyl-CoA dehydrogenase activity is the His-450. Asn-453 provides a ligand contact to NAD(+). Substrate contacts are provided by Asn-500 and Tyr-660.

In the N-terminal section; belongs to the enoyl-CoA hydratase/isomerase family. This sequence in the C-terminal section; belongs to the 3-hydroxyacyl-CoA dehydrogenase family. As to quaternary structure, heterotetramer of two alpha chains (FadB) and two beta chains (FadA).

The catalysed reaction is a (3S)-3-hydroxyacyl-CoA + NAD(+) = a 3-oxoacyl-CoA + NADH + H(+). It carries out the reaction a (3S)-3-hydroxyacyl-CoA = a (2E)-enoyl-CoA + H2O. The enzyme catalyses a 4-saturated-(3S)-3-hydroxyacyl-CoA = a (3E)-enoyl-CoA + H2O. It catalyses the reaction (3S)-3-hydroxybutanoyl-CoA = (3R)-3-hydroxybutanoyl-CoA. The catalysed reaction is a (3Z)-enoyl-CoA = a 4-saturated (2E)-enoyl-CoA. It carries out the reaction a (3E)-enoyl-CoA = a 4-saturated (2E)-enoyl-CoA. It participates in lipid metabolism; fatty acid beta-oxidation. Involved in the aerobic and anaerobic degradation of long-chain fatty acids via beta-oxidation cycle. Catalyzes the formation of 3-oxoacyl-CoA from enoyl-CoA via L-3-hydroxyacyl-CoA. It can also use D-3-hydroxyacyl-CoA and cis-3-enoyl-CoA as substrate. This is Fatty acid oxidation complex subunit alpha from Photorhabdus laumondii subsp. laumondii (strain DSM 15139 / CIP 105565 / TT01) (Photorhabdus luminescens subsp. laumondii).